The following is a 236-amino-acid chain: Small ribosomal subunit protein uS3 (236 aa).

The KH type-2 domain maps to 39–107 (IRKFLKREMY…EVFINIKEAK (69 aa)). The span at 214 to 229 (PEKKEESKSGDKEVRS) shows a compositional bias: basic and acidic residues. Residues 214-236 (PEKKEESKSGDKEVRSKSRRGRQ) form a disordered region.

The protein belongs to the universal ribosomal protein uS3 family. Part of the 30S ribosomal subunit. Forms a tight complex with proteins S10 and S14.

Functionally, binds the lower part of the 30S subunit head. Binds mRNA in the 70S ribosome, positioning it for translation. This is Small ribosomal subunit protein uS3 from Helicobacter hepaticus (strain ATCC 51449 / 3B1).